The sequence spans 74 residues: Large ribosomal subunit protein uL29 (74 aa).

This sequence belongs to the universal ribosomal protein uL29 family.

This chain is Large ribosomal subunit protein uL29 (rpmC), found in Streptomyces coelicolor (strain ATCC BAA-471 / A3(2) / M145).